We begin with the raw amino-acid sequence, 150 residues long: Protein Smg homolog (150 aa).

The protein belongs to the Smg family.

The sequence is that of Protein Smg homolog from Methylibium petroleiphilum (strain ATCC BAA-1232 / LMG 22953 / PM1).